A 285-amino-acid polypeptide reads, in one-letter code: Transcription factor LBX1 (285 aa).

Basic and acidic residues predominate over residues 1-20 (MTSKEDGKAAPGEERRRSPL). The disordered stretch occupies residues 1 to 36 (MTSKEDGKAAPGEERRRSPLDHLPPPANSNKPLTPF). The homeobox DNA-binding region spans 125–184 (RRKSRTAFTNHQIYELEKRFLYQKYLSPADRDQIAQQLGLTNAQVITWFQNRRAKLKRDL). The interval 212-285 (EQNSEASGGG…EEDEEIDVDD (74 aa)) is disordered. Over residues 218–230 (SGGGGGGGGGGCG) the composition is skewed to gly residues. Over residues 272–285 (CSEDEEDEEIDVDD) the composition is skewed to acidic residues.

In terms of assembly, interacts with SKOR1 which acts as a transcriptional corepressor.

It localises to the nucleus. Its function is as follows. Transcription factor required for the development of GABAergic interneurons in the dorsal horn of the spinal cord and migration and further development of hypaxial muscle precursor cells for limb muscles, diaphragm and hypoglossal cord. This is Transcription factor LBX1 from Rattus norvegicus (Rat).